Here is a 374-residue protein sequence, read N- to C-terminus: Biotin synthase (374 aa).

A Radical SAM core domain is found at 49–276 (NEVQVSTLLS…KSHVRLSAGR (228 aa)). Residues C64, C68, and C71 each coordinate [4Fe-4S] cluster. [2Fe-2S] cluster contacts are provided by C108, C139, C199, and R271. Residues 344 to 374 (QQQEQAEGSNDLFIDATKPKVAAKQQHATEA) are disordered.

This sequence belongs to the radical SAM superfamily. Biotin synthase family. Homodimer. [4Fe-4S] cluster serves as cofactor. [2Fe-2S] cluster is required as a cofactor.

The catalysed reaction is (4R,5S)-dethiobiotin + (sulfur carrier)-SH + 2 reduced [2Fe-2S]-[ferredoxin] + 2 S-adenosyl-L-methionine = (sulfur carrier)-H + biotin + 2 5'-deoxyadenosine + 2 L-methionine + 2 oxidized [2Fe-2S]-[ferredoxin]. The protein operates within cofactor biosynthesis; biotin biosynthesis; biotin from 7,8-diaminononanoate: step 2/2. Catalyzes the conversion of dethiobiotin (DTB) to biotin by the insertion of a sulfur atom into dethiobiotin via a radical-based mechanism. This Alteromonas mediterranea (strain DSM 17117 / CIP 110805 / LMG 28347 / Deep ecotype) protein is Biotin synthase.